A 606-amino-acid chain; its full sequence is GTLANIIMLEHYIKLRRLKGKTYNVVSLDIRKAFDTVSHPAILRAMRAFGIDDGMQDFIMSTITDAYTNIVVGGRTTNKIYIRNGVKQGDPLSPVLFNIVLDELVTRLNDEQPGASMTPACKIASLAFADDLLLLEDRDIDVPNSLATTCAYFRTRGMTLNPEKCASISAATVSGRSVPRSKPSFTIDGRYIKPLGGINTFKYLGLTFSSTGVAKPTVYNLTRWLRNLEKAPLKPNQKFYILKTHLLPRLFYGLQSPGVTAGILQECDRLARRTTRKIFHLNVHTGSQFLHARIRDGGLGLVQMRYRIPCILSKRLGSLKQGNDTTNWSDIFNIEGPARSFYFRIRFLSSKGDPDPYWREEIRTRPLSSGLQDAADDASSRSWLNTIPRGWTGRDFVRAVQLRTGNLATQGLPYMAPEHRGCRNGCPRTESLSHVLQGCPLTHHERIKRHNELVAKVAKHARKKGWTTEVEPYVYHQDGQLYKPDLAIHQPDNTLVICDVQVCWEGPRPLATSWDNKRLVYDNPRFREAAVRRWGDKSLVFSPLLLGARGIWPRANVPTCNILSIPTTLRASCVHTCLKWGSTIHRHFMAGVWRRRPPDPPRPVPP.

In terms of domain architecture, Reverse transcriptase spans 1–208 (GTLANIIMLE…NTFKYLGLTF (208 aa)). A nucleic acid-binding endonuclease region spans residues 331–606 (IFNIEGPARS…PPDPPRPVPP (276 aa)).

The catalysed reaction is DNA(n) + a 2'-deoxyribonucleoside 5'-triphosphate = DNA(n+1) + diphosphate. The polypeptide is Retrovirus-related Pol polyprotein from type-1 retrotransposable element R2 (Popillia japonica (Japanese beetle)).